The primary structure comprises 97 residues: Protein 9b (97 aa).

In terms of domain architecture, 9b spans 8-97 (VPPALHLVDP…PDEFVVVTAK (90 aa)).

Homodimer.

The protein resides in the host cytoplasmic vesicle membrane. The protein localises to the host cytoplasm. The protein is Protein 9b of Bat coronavirus 279/2005 (BtCoV).